Consider the following 332-residue polypeptide: Cysteine and histidine-rich domain-containing protein 1 (332 aa).

The residue at position 2 (Ala2) is an N-acetylalanine. The interval 2–77 is interaction with PPP5C; that stretch reads ALLCYNRGCG…KPPEPVKPEV (76 aa). Positions 5, 10, 24, 27, 42, and 43 each coordinate Zn(2+). CHORD domains follow at residues 5-64 and 157-216; these read CYNR…KGRH and CKNG…TGKH. Thr47 bears the Phosphothreonine mark. Phosphoserine is present on Ser51. Residues Cys59, His64, Cys157, Cys162, Cys176, His179, Cys194, Cys195, Cys211, and His216 each contribute to the Zn(2+) site. The segment at 61–82 is disordered; that stretch reads KGRHNSEKPPEPVKPEVKTTEK. Positions 64–82 are enriched in basic and acidic residues; that stretch reads HNSEKPPEPVKPEVKTTEK. Residues 65-316 are interaction with HSP90AA1 and HSP90AB1; the sequence is NSEKPPEPVK…AEPMQWASLE (252 aa). In terms of domain architecture, CS spans 227-316; that stretch reads VVPCRHDWHQ…AEPMQWASLE (90 aa).

As to quaternary structure, interacts with HSP90AA1, HSP90AB1, PPP5C, ROCK1 and ROCK2.

Regulates centrosome duplication, probably by inhibiting the kinase activity of ROCK2. Proposed to act as co-chaperone for HSP90. May play a role in the regulation of NOD1 via a HSP90 chaperone complex. In vitro, has intrinsic chaperone activity. This function may be achieved by inhibiting association of ROCK2 with NPM1. Plays a role in ensuring the localization of the tyrosine kinase receptor EGFR to the plasma membrane, and thus ensures the subsequent regulation of EGFR activity and EGF-induced actin cytoskeleton remodeling. Involved in stress response. Prevents tumorigenesis. The protein is Cysteine and histidine-rich domain-containing protein 1 (CHORDC1) of Sus scrofa (Pig).